Here is a 1312-residue protein sequence, read N- to C-terminus: AT-rich interactive domain-containing protein 4B (1312 aa).

Disordered stretches follow at residues 124 to 166 (PLTN…EDDR) and 266 to 306 (KTEL…EPFP). Phosphoserine occurs at positions 276, 295, and 296. The span at 277 to 305 (EAEEEEEEEDDEKEKEDNSSEEEEEIEPF) shows a compositional bias: acidic residues. The region spanning 306–398 (PEERENFLQQ…YLYGFEEYCR (93 aa)) is the ARID domain. Glycyl lysine isopeptide (Lys-Gly) (interchain with G-Cter in SUMO2) cross-links involve residues Lys-429, Lys-440, and Lys-462. 5 disordered regions span residues 458 to 577 (EIER…KVQV), 635 to 680 (IKHR…EMVS), 708 to 894 (QASE…TTGF), 909 to 1212 (LNNS…NRLP), and 1252 to 1288 (SEVASIDRRRKRLKKKERESAATSSSSSSPSSSSITA). The segment at 465 to 473 (IKPSLGSKK) is antigenic epitope. Ser-483 is subject to Phosphoserine. Positions 483-496 (SDQEKEVNIKKPED) are enriched in basic and acidic residues. Lys-517 is covalently cross-linked (Glycyl lysine isopeptide (Lys-Gly) (interchain with G-Cter in SUMO2)). Positions 532–567 (NKEEDEDDEEAEEEEEEEEEEEDEDDDDNNEEEEFE) are enriched in acidic residues. One can recognise a Tudor-knot domain in the interval 572–624 (GMKVQVRYGRGKNQKMYEASIKDSDVEGGEVLYLVHYCGWNVRYDEWIKADKI). Positions 643 to 656 (NKLDKEKDKDEKYS) are enriched in basic and acidic residues. 3 positions are modified to phosphoserine: Ser-666, Ser-675, and Ser-717. 2 stretches are compositionally biased toward basic and acidic residues: residues 722-754 (ERGAQDMDNNGKEESKIDHLTNNRNDLISKEEQ) and 778-787 (SPERLRKDIE). Positions 728–754 (MDNNGKEESKIDHLTNNRNDLISKEEQ) form a coiled coil. Lys-751 is covalently cross-linked (Glycyl lysine isopeptide (Lys-Gly) (interchain with G-Cter in SUMO2)). A phosphoserine mark is found at Ser-778 and Ser-790. The segment covering 788–799 (VLSEDTDYEEDE) has biased composition (acidic residues). Position 793 is a phosphothreonine (Thr-793). Basic and acidic residues-rich tracts occupy residues 807–816 (VKKDTTDKSS), 828–852 (CNTEECLKTGSPGKKEEKAKNKESL), 909–927 (LNNSDERLQNSRAKDRKDV), and 995–1010 (KPIEEKTVEVNDRKAE). Ser-1014 carries the phosphoserine modification. Thr-1026 is modified (phosphothreonine). A compositionally biased stretch (low complexity) spans 1028–1037 (ESPSSVTVTE). Phosphoserine is present on Ser-1029. Positions 1038-1047 (GSRQQSSVTV) are enriched in polar residues. Over residues 1056–1065 (EEVRSIKSET) the composition is skewed to basic and acidic residues. Positions 1087 to 1101 (SSPAGFDASVSSSSS) are enriched in low complexity. The tract at residues 1130–1137 (KKQKRSHK) is antigenic epitope. Residues 1130-1148 (KKQKRSHKATVVNNKKKGK) are compositionally biased toward basic residues. Position 1150 is a phosphothreonine (Thr-1150). Phosphoserine occurs at positions 1152, 1153, 1155, and 1159. Positions 1162 to 1191 (ESITKSQPVKSVSTGMKSHSTKSPARTQSP) are enriched in polar residues. A compositionally biased stretch (basic and acidic residues) spans 1196 to 1208 (KNGDKDPDLKEPS). The stretch at 1231–1270 (ERITILQEKLQEIRKHYLSLKSEVASIDRRRKRLKKKERE) forms a coiled coil. A compositionally biased stretch (low complexity) spans 1272–1288 (AATSSSSSSPSSSSITA).

Component of a Sin3A corepressor complex consisting of SIN3A, SAP130, SUDS3/SAP45, SAP180, HDAC1 and HDAC2. Interacts with ARID4A. Interacts with AR. Highly expressed in the testis and in breast, lung, colon, pancreatic and ovarian cancers. Expressed at low levels in the thymus, prostate and ovary.

It localises to the nucleus. The protein localises to the cytoplasm. Functionally, acts as a transcriptional repressor. May function in the assembly and/or enzymatic activity of the Sin3A corepressor complex or in mediating interactions between the complex and other regulatory complexes. Plays a role in the regulation of epigenetic modifications at the PWS/AS imprinting center near the SNRPN promoter, where it might function as part of a complex with RB1 and ARID4A. Involved in spermatogenesis, together with ARID4A, where it functions as a transcriptional coactivator for AR (androgen receptor) and enhances expression of genes required for sperm maturation. Regulates expression of the tight junction protein CLDN3 in the testis, which is important for integrity of the blood-testis barrier. Plays a role in myeloid homeostasis where it regulates the histone methylation state of bone marrow cells and expression of various genes involved in hematopoiesis. May function as a leukemia suppressor. The sequence is that of AT-rich interactive domain-containing protein 4B (ARID4B) from Homo sapiens (Human).